Consider the following 122-residue polypeptide: Hexon-interlacing protein (122 aa).

A coiled-coil region spans residues 72 to 106 (VTELNESIDELQQKMTELEKRLKIMEEKIEEIKLA).

The protein belongs to the adenoviridae hexon-interlacing protein family. Homotrimer. Interacts with hexon protein; this interaction tethers the hexons together. Self-interacts with adjacent proteins. Interacts with kinesin light chain KLC1; this interaction leads to capsid disruption at the nuclear pore complex during virus entry into host cell.

It localises to the virion. The protein localises to the host nucleus. Its function is as follows. Structural component of the virion that acts as a cement protein on the capsid exterior and forms triskelion structures consisting of three molecules that stabilize three hexon trimers at the center of each icosahedral facet and fixes the peripentonal hexons. Dispensable for assembly. During virus entry, recruits the anterograde motor kinesin-1 to the capsid docked at the nuclear pore complex thereby subjecting the docked capsid to a pulling force. The resulting tension leads to capsid disruption, dispersion of capsid fragments toward cell periphery and eventually viral DNA entry into the host nucleus. The chain is Hexon-interlacing protein from Tupaiidae (tree shrews).